Here is a 1077-residue protein sequence, read N- to C-terminus: TSC22 domain family protein 1 (1077 aa).

The interval 1–98 (MHQPPESTAA…SQAQLQGQPL (98 aa)) is required for interaction with TGFBR1 and promotion of TGF-beta signaling. Disordered stretches follow at residues 22–112 (MAHP…SGFQ), 125–283 (ISSN…VPSS), 458–492 (QTPTEASSSERESTSGSSVSSSVSTLSHYTESVGS), 842–874 (SSAAPSGMPSVPTNLVPPQNIAQPPATQNGSLV), and 909–947 (QAIGSQMEDARRPAEPSLGGLPQTMSGDSGGMSAVSDGS). Residues 58-70 (FPPPSLLQPPPPA) are compositionally biased toward pro residues. Positions 84 to 96 (SLNLLSQAQLQGQ) are enriched in low complexity. Positions 133–142 (EDTESYDDLD) are enriched in acidic residues. Over residues 216–240 (HPHHLHHHHHPHHGHHLHHGHHHSS) the composition is skewed to basic residues. Ser-263 carries the post-translational modification Phosphoserine. Residues 471–489 (TSGSSVSSSVSTLSHYTES) are compositionally biased toward low complexity. Positions 852–874 (VPTNLVPPQNIAQPPATQNGSLV) are enriched in polar residues. Residues 933-947 (MSGDSGGMSAVSDGS) are compositionally biased toward low complexity. The leucine-zipper stretch occupies residues 1010 to 1031 (LKEQIKELIEKNSQLEQENNLL). A disordered region spans residues 1042–1077 (QFQAQLQTGSPPATTQPQGTTQPPAQPASQGSGSTA). The span at 1048–1077 (QTGSPPATTQPQGTTQPPAQPASQGSGSTA) shows a compositional bias: low complexity.

This sequence belongs to the TSC-22/Dip/Bun family. As to quaternary structure, forms homodimers. Forms heterodimers. Component of a complex composed of TSC22D1 (via N-terminus), TGFBR1 and TGFBR2; the interaction between TSC22D1 and TGFBR1 is inhibited by SMAD7 and promoted by TGFB1. Interacts with SMAD7; the interaction requires TGF-beta and the interaction is inhibited by TGFBR1. Interacts with TPT1/fortilin; interaction results in the destabilization of TSC22D1 protein and prevents TSC22D1-mediated apoptosis. Interacts with SMAD4 (via N-terminus). Interacts with ACVRL1/ALK1, ACVR1/ALK2, BMPR1A/ALK3, ACVR1B/ALK4, BMPR1B/ALK6, ACVR2A/ACTRII, and BMPR2. Interacts with SMAD6. Interacts with TFE3; the interaction is enhanced in the presence of TGF-beta. Forms a heterodimer with TSC22D4/THG1. In terms of assembly, forms a heterodimer with TSC22D4/THG1. Interacts with histone H1-2. Interacts with GNL3. Expressed in bone marrow cells (at protein level). Expressed in T-cells. Expressed in the brain. As to expression, expressed in the myoepithelial cells of the mammary gland ducts and alveoli, expression is consistent throughout pregnancy, lactation and involution (at protein level). Expressed in the cortex, medulla and papilla of the kidney. In terms of tissue distribution, expressed in the myoepithelial cells of the mammary gland, expression significantly increases in the secretory luminal epithelium of the mammary gland at the initiation of involution, with levels decreasing from day 3 of involution onwards (at protein level). Expressed in the cortex, medulla and papilla of the kidney.

It is found in the cytoplasm. The protein resides in the nucleus. The protein localises to the cell membrane. Its subcellular location is the mitochondrion. Functionally, transcriptional repressor. Acts on the C-type natriuretic peptide (CNP) promoter. Acts to promote CASP3-mediated apoptosis. Positively regulates TGF-beta signaling by interacting with SMAD7 which inhibits binding of SMAD7 to TGFBR1, preventing recruitment of SMURF ubiquitin ligases to TGFBR1 and inhibiting SMURF-mediated ubiquitination and degradation of TGFBR1. Contributes to enhancement of TGF-beta signaling by binding to and modulating the transcription activator activity of SMAD4. Promotes TGF-beta-induced transcription of COL1A2; via its interaction with TFE3 at E-boxes in the gene proximal promoter. Plays a role in the repression of hematopoietic precursor cell growth. Promotes IL2 deprivation-induced apoptosis in T-lymphocytes, via repression of TSC22D3/GILZ transcription and activation of the caspase cascade. May act to negatively regulate TGFB3 signaling and thereby inhibit cell death in mammary gland cells. In terms of biological role, positively regulates cell death in response to TGFB3 during mammary gland involution. This chain is TSC22 domain family protein 1, found in Mus musculus (Mouse).